A 415-amino-acid chain; its full sequence is ATP-dependent RNA helicase RhlB (415 aa).

Positions 9 to 37 (QRFSALPLHPIVRGALAKKGFDFCTPIQA) match the Q motif motif. Residues 40-218 (LPISLNGRDV…FEDMNDPEYI (179 aa)) form the Helicase ATP-binding domain. Residue 53–60 (AQTGTGKT) participates in ATP binding. Positions 164-167 (DEAD) match the DEAD box motif. Residues 241 to 389 (DKMALLLTLM…VSQYETEALL (149 aa)) enclose the Helicase C-terminal domain.

The protein belongs to the DEAD box helicase family. RhlB subfamily. In terms of assembly, component of the RNA degradosome, which is a multiprotein complex involved in RNA processing and mRNA degradation.

Its subcellular location is the cytoplasm. The enzyme catalyses ATP + H2O = ADP + phosphate + H(+). In terms of biological role, DEAD-box RNA helicase involved in RNA degradation. Has RNA-dependent ATPase activity and unwinds double-stranded RNA. This Haemophilus influenzae (strain PittGG) protein is ATP-dependent RNA helicase RhlB.